Here is a 957-residue protein sequence, read N- to C-terminus: Bifunctional glutamine synthetase adenylyltransferase/adenylyl-removing enzyme (957 aa).

The interval 1 to 447 (MFSQLDFTGL…IFNQLIGEEE (447 aa)) is adenylyl removase. The segment at 454-957 (VNEQLAIWQD…IWQQIFTDNE (504 aa)) is adenylyl transferase.

It belongs to the GlnE family. It depends on Mg(2+) as a cofactor.

The catalysed reaction is [glutamine synthetase]-O(4)-(5'-adenylyl)-L-tyrosine + phosphate = [glutamine synthetase]-L-tyrosine + ADP. The enzyme catalyses [glutamine synthetase]-L-tyrosine + ATP = [glutamine synthetase]-O(4)-(5'-adenylyl)-L-tyrosine + diphosphate. Involved in the regulation of glutamine synthetase GlnA, a key enzyme in the process to assimilate ammonia. When cellular nitrogen levels are high, the C-terminal adenylyl transferase (AT) inactivates GlnA by covalent transfer of an adenylyl group from ATP to specific tyrosine residue of GlnA, thus reducing its activity. Conversely, when nitrogen levels are low, the N-terminal adenylyl removase (AR) activates GlnA by removing the adenylyl group by phosphorolysis, increasing its activity. The regulatory region of GlnE binds the signal transduction protein PII (GlnB) which indicates the nitrogen status of the cell. The sequence is that of Bifunctional glutamine synthetase adenylyltransferase/adenylyl-removing enzyme from Haemophilus ducreyi (strain 35000HP / ATCC 700724).